The following is a 367-amino-acid chain: Dihydroorotate dehydrogenase (quinone) (367 aa).

Residues 67–71 (AGFDK) and Thr91 contribute to the FMN site. Lys71 provides a ligand contact to substrate. Residue 116–120 (NRLGF) participates in substrate binding. Positions 145 and 178 each coordinate FMN. Asn178 lines the substrate pocket. The active-site Nucleophile is Ser181. A substrate-binding site is contributed by Asn183. The FMN site is built by Lys219 and Thr247. 248-249 (NT) is a substrate binding site. FMN is bound by residues Gly269, Gly298, and 319 to 320 (YT).

The protein belongs to the dihydroorotate dehydrogenase family. Type 2 subfamily. As to quaternary structure, monomer. The cofactor is FMN.

It is found in the cell membrane. It catalyses the reaction (S)-dihydroorotate + a quinone = orotate + a quinol. The protein operates within pyrimidine metabolism; UMP biosynthesis via de novo pathway; orotate from (S)-dihydroorotate (quinone route): step 1/1. Catalyzes the conversion of dihydroorotate to orotate with quinone as electron acceptor. This is Dihydroorotate dehydrogenase (quinone) from Roseiflexus castenholzii (strain DSM 13941 / HLO8).